The following is a 298-amino-acid chain: N-acetylmuramic acid 6-phosphate etherase (298 aa).

The SIS domain maps to 55-218; sequence IHAQVSGGGR…STGLMIKSGK (164 aa). Catalysis depends on Glu-83, which acts as the Proton donor. Glu-114 is an active-site residue.

It belongs to the GCKR-like family. MurNAc-6-P etherase subfamily. In terms of assembly, homodimer.

The catalysed reaction is N-acetyl-D-muramate 6-phosphate + H2O = N-acetyl-D-glucosamine 6-phosphate + (R)-lactate. It participates in amino-sugar metabolism; 1,6-anhydro-N-acetylmuramate degradation. The protein operates within amino-sugar metabolism; N-acetylmuramate degradation. Its pathway is cell wall biogenesis; peptidoglycan recycling. In terms of biological role, specifically catalyzes the cleavage of the D-lactyl ether substituent of MurNAc 6-phosphate, producing GlcNAc 6-phosphate and D-lactate. Together with AnmK, is also required for the utilization of anhydro-N-acetylmuramic acid (anhMurNAc) either imported from the medium or derived from its own cell wall murein, and thus plays a role in cell wall recycling. The protein is N-acetylmuramic acid 6-phosphate etherase of Shigella flexneri serotype 5b (strain 8401).